We begin with the raw amino-acid sequence, 888 residues long: Dilute domain-containing protein YPR089W (888 aa).

A Dilute domain is found at Asp-360–Asp-745. Disordered stretches follow at residues Lys-462 to Ser-504, Lys-805 to Glu-827, and Leu-865 to Trp-888. Composition is skewed to polar residues over residues Asn-809–Phe-823 and Ile-867–Asn-880.

It is found in the golgi apparatus. This Saccharomyces cerevisiae (strain ATCC 204508 / S288c) (Baker's yeast) protein is Dilute domain-containing protein YPR089W.